A 464-amino-acid polypeptide reads, in one-letter code: Cyclin-dependent kinase 8 (464 aa).

Positions 1 to 15 (MDYDFKVKLSSERER) are interaction with CCNC. A Protein kinase domain is found at 21-335 (EYEGCKVGRG…SEQAMQDPYF (315 aa)). ATP-binding positions include 27–35 (VGRGTYGHV) and lysine 52. Aspartate 151 (proton acceptor) is an active-site residue. Residues 358-464 (FLTEEEPDEK…PQYSHQTHRY (107 aa)) are disordered. Residues 373–391 (QQQQQGNNHTNGTGHPGNQ) show a composition bias toward low complexity. Polar residues-rich tracts occupy residues 409–426 (PTTT…QRSN) and 436–464 (PSTS…THRY).

The protein belongs to the protein kinase superfamily. CMGC Ser/Thr protein kinase family. CDC2/CDKX subfamily. Component of the Mediator complex, which is composed of MED1, MED4, MED6, MED7, MED8, MED9, MED10, MED11, MED12, MED13, MED13L, MED14, MED15, MED16, MED17, MED18, MED19, MED20, MED21, MED22, MED23, MED24, MED25, MED26, MED27, MED29, MED30, MED31, CCNC, CDK8 and CDC2L6/CDK11. The MED12, MED13, CCNC and CDK8 subunits form a distinct module termed the CDK8 module. Mediator containing the CDK8 module is less active than Mediator lacking this module in supporting transcriptional activation. Individual preparations of the Mediator complex lacking one or more distinct subunits have been variously termed ARC, CRSP, DRIP, PC2, SMCC and TRAP. The cylin/CDK pair formed by CCNC/CDK8 also associates with the large subunit of RNA polymerase II. Interacts with CTNNB1, GLI3 and MAML1. Mg(2+) is required as a cofactor.

The protein localises to the nucleus. It carries out the reaction L-seryl-[protein] + ATP = O-phospho-L-seryl-[protein] + ADP + H(+). The catalysed reaction is L-threonyl-[protein] + ATP = O-phospho-L-threonyl-[protein] + ADP + H(+). It catalyses the reaction [DNA-directed RNA polymerase] + ATP = phospho-[DNA-directed RNA polymerase] + ADP + H(+). Component of the Mediator complex, a coactivator involved in regulated gene transcription of nearly all RNA polymerase II-dependent genes. Mediator functions as a bridge to convey information from gene-specific regulatory proteins to the basal RNA polymerase II transcription machinery. Mediator is recruited to promoters by direct interactions with regulatory proteins and serves as a scaffold for the assembly of a functional pre-initiation complex with RNA polymerase II and the general transcription factors. Phosphorylates the CTD (C-terminal domain) of the large subunit of RNA polymerase II (RNAp II), which may inhibit the formation of a transcription initiation complex. Phosphorylates CCNH leading to down-regulation of the TFIIH complex and transcriptional repression. Recruited through interaction with MAML1 to hyperphosphorylate the intracellular domain of NOTCH, leading to its degradation. The sequence is that of Cyclin-dependent kinase 8 (Cdk8) from Mus musculus (Mouse).